Reading from the N-terminus, the 974-residue chain is Bifunctional glutamine synthetase adenylyltransferase/adenylyl-removing enzyme (974 aa).

Positions 1–464 (MKNAFLKTHL…HYAALFENEQ (464 aa)) are adenylyl removase. The adenylyl transferase stretch occupies residues 468–974 (LEIGNLVFTG…CSIFKQIMKH (507 aa)).

It belongs to the GlnE family. The cofactor is Mg(2+).

It carries out the reaction [glutamine synthetase]-O(4)-(5'-adenylyl)-L-tyrosine + phosphate = [glutamine synthetase]-L-tyrosine + ADP. The catalysed reaction is [glutamine synthetase]-L-tyrosine + ATP = [glutamine synthetase]-O(4)-(5'-adenylyl)-L-tyrosine + diphosphate. Involved in the regulation of glutamine synthetase GlnA, a key enzyme in the process to assimilate ammonia. When cellular nitrogen levels are high, the C-terminal adenylyl transferase (AT) inactivates GlnA by covalent transfer of an adenylyl group from ATP to specific tyrosine residue of GlnA, thus reducing its activity. Conversely, when nitrogen levels are low, the N-terminal adenylyl removase (AR) activates GlnA by removing the adenylyl group by phosphorolysis, increasing its activity. The regulatory region of GlnE binds the signal transduction protein PII (GlnB) which indicates the nitrogen status of the cell. The protein is Bifunctional glutamine synthetase adenylyltransferase/adenylyl-removing enzyme of Bartonella quintana (strain Toulouse) (Rochalimaea quintana).